Consider the following 356-residue polypeptide: MTRLRKIIHVDMDAFYASVEQRDDPSLRGKPVVVAWRGARSVVCAASYEARVFGVRSAMPAVRAERLCPDAIFVPPDFARYKAVSQQVREIFLRHTDLVEPLSLDEAYLDVTEPKSGMELATDIARTIRAQIREETQLTASAGIAPNKFLAKIASDWRKPDGQFVIPPQRVDAFLLPLPVNRVPGVGKVMEGKLAARGIVTCGDLRQWALIDLEEAFGSFGRSLYNRARGVDERPVEPDQQVQSISSEDTFAEDLPLEDLGEAIVQLAEKTWNATRKTERVGHTVVLKLKTAQFRILTRSFTPERPPESMEELRDIALALRARVDLPADTRYRLVGVGLSGFRDKEPVVQGELFEH.

The 181-residue stretch at 7–187 folds into the UmuC domain; sequence IIHVDMDAFY…LPVNRVPGVG (181 aa). The Mg(2+) site is built by aspartate 11 and aspartate 105. Glutamate 106 is an active-site residue.

The protein belongs to the DNA polymerase type-Y family. In terms of assembly, monomer. It depends on Mg(2+) as a cofactor.

Its subcellular location is the cytoplasm. The enzyme catalyses DNA(n) + a 2'-deoxyribonucleoside 5'-triphosphate = DNA(n+1) + diphosphate. Poorly processive, error-prone DNA polymerase involved in untargeted mutagenesis. Copies undamaged DNA at stalled replication forks, which arise in vivo from mismatched or misaligned primer ends. These misaligned primers can be extended by PolIV. Exhibits no 3'-5' exonuclease (proofreading) activity. May be involved in translesional synthesis, in conjunction with the beta clamp from PolIII. The chain is DNA polymerase IV from Stenotrophomonas maltophilia (strain R551-3).